We begin with the raw amino-acid sequence, 23 residues long: Caerin-4.1 (23 aa).

In terms of tissue distribution, expressed by the skin parotoid and/or rostral glands.

It is found in the secreted. Its function is as follows. Antibacterial peptide, that adopts an alpha helical conformation which can disrupt bacterial membranes. Each caerin displays a different antimicrobial specificity. In Ranoidea caerulea (Green tree frog), this protein is Caerin-4.1.